The chain runs to 429 residues: MTLKITPARGLRGEAWVPGDKSISHRVVMLGSLARGETAATNFLPGEDCLATVRCFRALGVEIEGPDGDTIRIRGRGPEALTEAPDVLDAGNSGTTMRLMLGILAGQPFFSVITGDASLRRRPMGRVTGPLQEMGATILGRRNANLAPIAVAGGRLSGIRYRLPVASAQLKSALLLAGLFADSPTEVTEPVATRDHTERMLAAFGALVARRGSSVTVAPSPELCGREIRIPGDISSAAFFIVAALITPESDLVLKDVGVNPTRTGILDALANMGARISVSRPRESGGEPVADIRVRSSALRGTVIEGALIPRLVDEIPVLAVAAAYADGETVIRDAAELRVKESDRLAATRKELSTLGADIRETPDGLVIRGPRRLTGGSCNSHGDHRIAMAAAVAGLAASDVTIIRDSNCIDVSFPGFAHALNSLRLE.

Lys21, Ser22, and Arg26 together coordinate 3-phosphoshikimate. A phosphoenolpyruvate-binding site is contributed by Lys21. Phosphoenolpyruvate is bound by residues Gly94 and Arg122. 3-phosphoshikimate-binding residues include Ser167, Gln169, Asp315, and Lys342. Gln169 is a binding site for phosphoenolpyruvate. The active-site Proton acceptor is the Asp315. Phosphoenolpyruvate contacts are provided by Arg346 and Arg388.

Belongs to the EPSP synthase family. Monomer.

The protein localises to the cytoplasm. The enzyme catalyses 3-phosphoshikimate + phosphoenolpyruvate = 5-O-(1-carboxyvinyl)-3-phosphoshikimate + phosphate. It functions in the pathway metabolic intermediate biosynthesis; chorismate biosynthesis; chorismate from D-erythrose 4-phosphate and phosphoenolpyruvate: step 6/7. Catalyzes the transfer of the enolpyruvyl moiety of phosphoenolpyruvate (PEP) to the 5-hydroxyl of shikimate-3-phosphate (S3P) to produce enolpyruvyl shikimate-3-phosphate and inorganic phosphate. This is 3-phosphoshikimate 1-carboxyvinyltransferase from Desulforudis audaxviator (strain MP104C).